Here is a 503-residue protein sequence, read N- to C-terminus: Maturase K (503 aa).

It belongs to the intron maturase 2 family. MatK subfamily.

The protein resides in the plastid. The protein localises to the chloroplast. Functionally, usually encoded in the trnK tRNA gene intron. Probably assists in splicing its own and other chloroplast group II introns. The sequence is that of Maturase K from Actinodium cunninghamii (Albany daisy).